An 88-amino-acid chain; its full sequence is Small ribosomal subunit protein bS20 (88 aa).

A disordered region spans residues 1–27; it reads MANSKSAKKRALQSEKRRQHNASRRSM.

This sequence belongs to the bacterial ribosomal protein bS20 family.

Binds directly to 16S ribosomal RNA. The sequence is that of Small ribosomal subunit protein bS20 from Shewanella putrefaciens (strain CN-32 / ATCC BAA-453).